The following is a 213-amino-acid chain: KHG/KDPG aldolase (213 aa).

The Proton acceptor role is filled by E45. Pyruvate contacts are provided by R49, T73, and K133. K133 serves as the catalytic Schiff-base intermediate with substrate.

It belongs to the KHG/KDPG aldolase family. As to quaternary structure, homotrimer.

Its subcellular location is the cytoplasm. It catalyses the reaction 2-dehydro-3-deoxy-6-phospho-D-gluconate = D-glyceraldehyde 3-phosphate + pyruvate. The catalysed reaction is (4S)-4-hydroxy-2-oxoglutarate = glyoxylate + pyruvate. It participates in carbohydrate acid metabolism; 2-dehydro-3-deoxy-D-gluconate degradation; D-glyceraldehyde 3-phosphate and pyruvate from 2-dehydro-3-deoxy-D-gluconate: step 2/2. The protein operates within carbohydrate metabolism; glyoxylate and dicarboxylate metabolism. In terms of biological role, involved in the degradation of glucose via the Entner-Doudoroff pathway. Catalyzes the reversible, stereospecific retro-aldol cleavage of 2-keto-3-deoxy-6-phosphogluconate (KDPG) to pyruvate and D-glyceraldehyde-3-phosphate. In addition to its KDPG aldolase activity, catalyzes the reversible cleavage of 2-keto-4-hydroxyglutarate (KHG) to glyoxylate and pyruvate. The enzyme is stereoselective for the S-enantiomer of KHG. Cleavage of KHG could serve in tricarboxylic acid (TCA) cycle regulation or, when operating in the reverse direction, in the detoxification of glyoxylate. The protein is KHG/KDPG aldolase (eda) of Escherichia coli O157:H7.